Consider the following 178-residue polypeptide: ATP-dependent protease subunit HslV (178 aa).

Residue Thr2 is part of the active site. Na(+) is bound by residues Gly157, Cys160, and Thr163.

It belongs to the peptidase T1B family. HslV subfamily. In terms of assembly, a double ring-shaped homohexamer of HslV is capped on each side by a ring-shaped HslU homohexamer. The assembly of the HslU/HslV complex is dependent on binding of ATP.

It is found in the cytoplasm. It catalyses the reaction ATP-dependent cleavage of peptide bonds with broad specificity.. Its activity is regulated as follows. Allosterically activated by HslU binding. Protease subunit of a proteasome-like degradation complex believed to be a general protein degrading machinery. This chain is ATP-dependent protease subunit HslV, found in Hamiltonella defensa subsp. Acyrthosiphon pisum (strain 5AT).